The following is a 456-amino-acid chain: Putative F-box/LRR-repeat protein At3g18150 (456 aa).

The 49-residue stretch at 30 to 78 folds into the F-box domain; the sequence is VDSISSLPDVILQHILSFIPTKLAITTSLLSKRWRHVWCDTPSLSFNDY. LRR repeat units lie at residues 177 to 202, 203 to 213, 228 to 253, 278 to 303, 333 to 358, and 396 to 422; these read TCLL…TLDH, CGGLRVLDLSK, VPEL…KLPC, KADF…TLGG, IFQY…TLLT, and CLDV…DKMV.

The polypeptide is Putative F-box/LRR-repeat protein At3g18150 (Arabidopsis thaliana (Mouse-ear cress)).